The primary structure comprises 255 residues: MLQISHLYADYGGKPALEDINLTLESGELLVVLGPSGCGKTTLLNLIAGFVPYQHGSIQLAGKRIEGPGAERGVVFQNEGLLPWRNVQDNVAFGLQLAGIEKMQRLEIAYQMLKKVGLEGAEKRYIWQLSGGQRQRVGIARALAANPQLLLLDEPFGALDAFTRDQMQTLLLKLWQETGKQVLLITHDIEEAVFMATELVLLSSGLGRVLERLPLNFARRFVAGESSRSIKSDPQFIAMREYVLSRVFEQREAFS.

The region spanning 2–229 is the ABC transporter domain; sequence LQISHLYADY…RFVAGESSRS (228 aa). 34-41 contacts ATP; that stretch reads GPSGCGKT.

It belongs to the ABC transporter superfamily. Taurine importer (TC 3.A.1.17.1) family. The complex is composed of two ATP-binding proteins (TauB), two transmembrane proteins (TauC) and a solute-binding protein (TauA).

The protein localises to the cell inner membrane. It catalyses the reaction taurine(out) + ATP + H2O = taurine(in) + ADP + phosphate + H(+). Functionally, part of the ABC transporter complex TauABC involved in taurine import. Responsible for energy coupling to the transport system. The sequence is that of Taurine import ATP-binding protein TauB from Shigella dysenteriae serotype 1 (strain Sd197).